The primary structure comprises 467 residues: Argininosuccinate lyase (467 aa).

This sequence belongs to the lyase 1 family. Argininosuccinate lyase subfamily.

It localises to the cytoplasm. The catalysed reaction is 2-(N(omega)-L-arginino)succinate = fumarate + L-arginine. It functions in the pathway amino-acid biosynthesis; L-arginine biosynthesis; L-arginine from L-ornithine and carbamoyl phosphate: step 3/3. The protein is Argininosuccinate lyase of Anaeromyxobacter sp. (strain K).